Reading from the N-terminus, the 264-residue chain is uncharacterized protein (264 aa).

Residues 7–27 traverse the membrane as a helical segment; that stretch reads LTLGICLVLLIILIVGYVIMT.

The protein belongs to the staphylococcal tandem lipoprotein family.

Its subcellular location is the cell membrane. This is an uncharacterized protein from Staphylococcus aureus (strain MW2).